Here is a 1517-residue protein sequence, read N- to C-terminus: DNA-directed RNA polymerase subunit beta' (1517 aa).

Zn(2+)-binding residues include C71, C73, C86, and C89. The Mg(2+) site is built by D482, D484, and D486. Residues C812, C886, C893, and C896 each contribute to the Zn(2+) site.

The protein belongs to the RNA polymerase beta' chain family. The RNAP catalytic core consists of 2 alpha, 1 beta, 1 beta' and 1 omega subunit. When a sigma factor is associated with the core the holoenzyme is formed, which can initiate transcription. Mg(2+) serves as cofactor. Requires Zn(2+) as cofactor.

The enzyme catalyses RNA(n) + a ribonucleoside 5'-triphosphate = RNA(n+1) + diphosphate. DNA-dependent RNA polymerase catalyzes the transcription of DNA into RNA using the four ribonucleoside triphosphates as substrates. The protein is DNA-directed RNA polymerase subunit beta' of Campylobacter jejuni subsp. jejuni serotype O:23/36 (strain 81-176).